The primary structure comprises 100 residues: Histone-like protein p6 (100 aa).

The DNA-binding element occupies 1–19 (MRKMMQREVTYTTAQLARM).

Belongs to the phi29likevirus histone-like protein p6 family. Homodimer. Homomultimer. Binds to double-stranded DNA giving rise to multimeric nucleoprotein complexes. Binding specificity for the viral DNA is based on supercoiling, the viral genome having a negative superhelicity lower than that of plasmid DNA. Interacts with the DNA replication protein p17; this interaction optimizes the binding of protein p6 at the viral DNA ends, thus favoring the initiation of replication.

Functionally, histone-like nucleoprotein that binds to the viral dsDNA and responsible for wrapping and compacting the viral DNA about 4-fold. Forms a nucleoprotein complex in which the DNA adopts a right-handed toroidal conformation winding around a protein core. Binds ito most, if not all, the viral genome, although with different affinity, the highest one corresponding to the genome ends. The formation of the nucleoprotein complex at the genome ends, activates the initiation of viral DNA replication. The binding of p6 would recruit the complex formed by the TP and the DNA polymerase to the origin. Protein p6 also represses early transcription from promoter C2, and, together with protein p4, represses transcription from promoters A2b and A2c and activates late transcription from promoter A3. Protein p6 is therefore involved in the early to late transcription switch. The formation of the nucleoprotein complex at the right end of the phage genome where the early promoter C2 is located affects local topology, which may contribute to the promoter repression. The sequence is that of Histone-like protein p6 (6) from Bacillus phage B103 (Bacteriophage B103).